Reading from the N-terminus, the 309-residue chain is Protein FdhE (309 aa).

Belongs to the FdhE family.

It localises to the cytoplasm. Its function is as follows. Necessary for formate dehydrogenase activity. The chain is Protein FdhE from Escherichia coli (strain SMS-3-5 / SECEC).